The primary structure comprises 237 residues: Probable 2-phosphosulfolactate phosphatase (237 aa).

This sequence belongs to the ComB family. Requires Mg(2+) as cofactor.

It catalyses the reaction (2R)-O-phospho-3-sulfolactate + H2O = (2R)-3-sulfolactate + phosphate. The polypeptide is Probable 2-phosphosulfolactate phosphatase (Thermus thermophilus (strain ATCC 27634 / DSM 579 / HB8)).